A 350-amino-acid polypeptide reads, in one-letter code: MILPFSTQFTCPVQDNGFSPSSLLSHCKRDRFEVTSLRYDSFGSVKTASSSKWNVMRSRRNVKAFGLVDKLGKKVWRKKEEDSDSEDEEDEVKEETFGGKEASLDDPVERREWRKTIREVIDKHPDIEEDEEIDMVEKRRKMQKLLADYPLVVNEEDPNWPEDADGWGFSFNQFFNKITIKNEKKEEEDDDEDSEGDDSEKEIVWQDDNYIRPIKDLTTAEWEEAVFKDISPLMVLVHNRYKRPKENEKFREELEKAIQVIWNCGLPSPRCVAVDAVVETDLVSALKVSVFPEIIFTKAGKILYREKGIRTADELSKIMAFFYYGAAKPPCLNGVVNSQEQIPLVDVSVN.

Residues 1 to 48 (MILPFSTQFTCPVQDNGFSPSSLLSHCKRDRFEVTSLRYDSFGSVKTA) constitute a chloroplast transit peptide. Disordered stretches follow at residues 78-107 (KKEE…LDDP) and 182-201 (NEKK…DSEK). Acidic residues-rich tracts occupy residues 82–93 (DSDSEDEEDEVK) and 186–200 (EEED…DDSE).

It localises to the plastid. It is found in the chloroplast stroma. Its subcellular location is the nucleus. Plays an essential role in early steps of chloroplast development. Involved in the regulation of plastid gene expression. Required for the proper function of the plastid transcriptional machinery and protein accumulation in thylakoid membranes. May function as molecular chaperone to ensure proper organization of the nucleoids in chloroplasts. Is a necessary component of phytochrome signaling for photosynthesis-associated plastid-encoded genes (PhAPGs) activation. Mediates the degradation of two repressors of chloroplast biogenesis, PIF1 and PIF3 in nucleus. Promotes the assembly of the plastid-encoded RNA polymerase (PEP) complex for PhAPG transcription in plastids. The sequence is that of Thioredoxin-like fold domain-containing protein MRL7L, chloroplastic from Arabidopsis thaliana (Mouse-ear cress).